The following is a 111-amino-acid chain: X antigen family member 3 (111 aa).

The segment at 1 to 111 is disordered; the sequence is MIWRGRSTYR…PEGGDRQPQV (111 aa). Acidic residues predominate over residues 29–40; that stretch reads PGDEEPQQEEPP. Over residues 97 to 111 the composition is skewed to basic and acidic residues; sequence EQFKMPEGGDRQPQV.

The protein belongs to the GAGE family.

This is X antigen family member 3 (XAGE3) from Homo sapiens (Human).